A 301-amino-acid polypeptide reads, in one-letter code: F-box protein At4g02733 (301 aa).

In terms of domain architecture, F-box spans 91-146 (NSISWFLPSELTVKVFSMVDTKSLMQASACCTMFNNCAMDPLCYFHIDLTKAFKHV).

This chain is F-box protein At4g02733, found in Arabidopsis thaliana (Mouse-ear cress).